The primary structure comprises 434 residues: Anaerobic glycerol-3-phosphate dehydrogenase subunit B (434 aa).

Belongs to the anaerobic G-3-P dehydrogenase subunit B family. As to quaternary structure, composed of a catalytic GlpA/B dimer and of membrane bound GlpC. FMN is required as a cofactor.

The catalysed reaction is a quinone + sn-glycerol 3-phosphate = dihydroxyacetone phosphate + a quinol. The protein operates within polyol metabolism; glycerol degradation via glycerol kinase pathway; glycerone phosphate from sn-glycerol 3-phosphate (anaerobic route): step 1/1. In terms of biological role, conversion of glycerol 3-phosphate to dihydroxyacetone. Uses fumarate or nitrate as electron acceptor. The polypeptide is Anaerobic glycerol-3-phosphate dehydrogenase subunit B (Histophilus somni (strain 2336) (Haemophilus somnus)).